A 500-amino-acid polypeptide reads, in one-letter code: Glycerol kinase (500 aa).

Thr13 lines the ADP pocket. Positions 13, 14, and 15 each coordinate ATP. Position 13 (Thr13) interacts with sn-glycerol 3-phosphate. Arg17 is an ADP binding site. Sn-glycerol 3-phosphate is bound by residues Arg83, Glu84, Tyr135, and Asp245. Positions 83, 84, 135, 245, and 246 each coordinate glycerol. The ADP site is built by Thr267 and Gly310. Thr267, Gly310, Gln314, and Gly411 together coordinate ATP. ADP-binding residues include Gly411 and Asn415.

Belongs to the FGGY kinase family. Homotetramer and homodimer (in equilibrium).

It carries out the reaction glycerol + ATP = sn-glycerol 3-phosphate + ADP + H(+). Its pathway is polyol metabolism; glycerol degradation via glycerol kinase pathway; sn-glycerol 3-phosphate from glycerol: step 1/1. Its activity is regulated as follows. Activated by phosphorylation and inhibited by fructose 1,6-bisphosphate (FBP). Functionally, key enzyme in the regulation of glycerol uptake and metabolism. Catalyzes the phosphorylation of glycerol to yield sn-glycerol 3-phosphate. This is Glycerol kinase from Lactobacillus acidophilus (strain ATCC 700396 / NCK56 / N2 / NCFM).